Reading from the N-terminus, the 257-residue chain is Probable 6-phosphogluconolactonase (257 aa).

It belongs to the glucosamine/galactosamine-6-phosphate isomerase family. 6-phosphogluconolactonase subfamily.

The catalysed reaction is 6-phospho-D-glucono-1,5-lactone + H2O = 6-phospho-D-gluconate + H(+). Its pathway is carbohydrate degradation; pentose phosphate pathway; D-ribulose 5-phosphate from D-glucose 6-phosphate (oxidative stage): step 2/3. Its function is as follows. Hydrolysis of 6-phosphogluconolactone to 6-phosphogluconate. This Schizosaccharomyces pombe (strain 972 / ATCC 24843) (Fission yeast) protein is Probable 6-phosphogluconolactonase.